Consider the following 593-residue polypeptide: Glutamyl-tRNA(Gln) amidotransferase subunit B, mitochondrial (593 aa).

Residues 1-49 (MLRPWLRQSTRAARSLPCCQCPRPYSSRLPTLTSPSSSVRRLQTSASES) constitute a mitochondrion transit peptide. Residues 27 to 42 (SRLPTLTSPSSSVRRL) are compositionally biased toward low complexity. The disordered stretch occupies residues 27–80 (SRLPTLTSPSSSVRRLQTSASESQDRVPLRKQLKQNAKALKAEKRQRRESEEAS). The span at 66-80 (LKAEKRQRRESEEAS) shows a compositional bias: basic and acidic residues.

It belongs to the GatB/GatE family. GatB subfamily. As to quaternary structure, subunit of the heterotrimeric GatCAB amidotransferase (AdT) complex, composed of A, B and C subunits.

Its subcellular location is the mitochondrion. It carries out the reaction L-glutamyl-tRNA(Gln) + L-glutamine + ATP + H2O = L-glutaminyl-tRNA(Gln) + L-glutamate + ADP + phosphate + H(+). Functionally, allows the formation of correctly charged Gln-tRNA(Gln) through the transamidation of misacylated Glu-tRNA(Gln) in the mitochondria. The reaction takes place in the presence of glutamine and ATP through an activated gamma-phospho-Glu-tRNA(Gln). The polypeptide is Glutamyl-tRNA(Gln) amidotransferase subunit B, mitochondrial (Aspergillus oryzae (strain ATCC 42149 / RIB 40) (Yellow koji mold)).